We begin with the raw amino-acid sequence, 141 residues long: Large ribosomal subunit protein uL14 (141 aa).

This sequence belongs to the universal ribosomal protein uL14 family. As to quaternary structure, part of the 50S ribosomal subunit. Forms a cluster with proteins L3 and L24e, part of which may contact the 16S rRNA in 2 intersubunit bridges.

Its function is as follows. Binds to 23S rRNA. Forms part of two intersubunit bridges in the 70S ribosome. In Pyrococcus horikoshii (strain ATCC 700860 / DSM 12428 / JCM 9974 / NBRC 100139 / OT-3), this protein is Large ribosomal subunit protein uL14.